The following is a 219-amino-acid chain: MTQDEMKKAAGWAALQYVEENSIVGVGTGSTVNHFIDALATMKFDIEGAVSSSEASTEKMKALGIPVFDLNSVNELSVYVDGADEINSQMDMIKGGGAALTREKIVAAVADKFICIVDNTKQVDILGEFPLPIEVIPMARSYVARQIVKLGGDPVYREGCVTDNGNIIIDVYNMKIMKPKELEQQIDGIVGVVTNGLFAKRGADILLVGTPEGVKTVTF.

Substrate contacts are provided by residues 28–31, 81–84, and 94–97; these read TGST, DGAD, and KGGG. E103 acts as the Proton acceptor in catalysis. K121 lines the substrate pocket.

It belongs to the ribose 5-phosphate isomerase family. Homodimer.

The catalysed reaction is aldehydo-D-ribose 5-phosphate = D-ribulose 5-phosphate. It functions in the pathway carbohydrate degradation; pentose phosphate pathway; D-ribose 5-phosphate from D-ribulose 5-phosphate (non-oxidative stage): step 1/1. In terms of biological role, catalyzes the reversible conversion of ribose-5-phosphate to ribulose 5-phosphate. This Shewanella pealeana (strain ATCC 700345 / ANG-SQ1) protein is Ribose-5-phosphate isomerase A.